A 303-amino-acid polypeptide reads, in one-letter code: Putative S-adenosyl-L-methionine-dependent methyltransferase MSMEG_1479/MSMEI_1443 (303 aa).

S-adenosyl-L-methionine-binding positions include aspartate 130 and 159–160 (DL).

Belongs to the UPF0677 family.

Functionally, exhibits S-adenosyl-L-methionine-dependent methyltransferase activity. The sequence is that of Putative S-adenosyl-L-methionine-dependent methyltransferase MSMEG_1479/MSMEI_1443 from Mycolicibacterium smegmatis (strain ATCC 700084 / mc(2)155) (Mycobacterium smegmatis).